Reading from the N-terminus, the 457-residue chain is Siroheme synthase 2 (457 aa).

The tract at residues 1 to 204 (MDHLPIFCQL…DDRQAVADTT (204 aa)) is precorrin-2 dehydrogenase /sirohydrochlorin ferrochelatase. NAD(+) is bound by residues 22 to 23 (DV) and 43 to 44 (LD). Ser128 is subject to Phosphoserine. The tract at residues 216-457 (GEVVLVGAGP…RDKLNWFSNH (242 aa)) is uroporphyrinogen-III C-methyltransferase. Pro225 is an S-adenosyl-L-methionine binding site. Catalysis depends on Asp248, which acts as the Proton acceptor. Lys270 serves as the catalytic Proton donor. S-adenosyl-L-methionine-binding positions include 301–303 (GGD), Ile306, 331–332 (TA), Met382, and Gly411.

In the N-terminal section; belongs to the precorrin-2 dehydrogenase / sirohydrochlorin ferrochelatase family. It in the C-terminal section; belongs to the precorrin methyltransferase family.

It carries out the reaction uroporphyrinogen III + 2 S-adenosyl-L-methionine = precorrin-2 + 2 S-adenosyl-L-homocysteine + H(+). The catalysed reaction is precorrin-2 + NAD(+) = sirohydrochlorin + NADH + 2 H(+). The enzyme catalyses siroheme + 2 H(+) = sirohydrochlorin + Fe(2+). It participates in cofactor biosynthesis; adenosylcobalamin biosynthesis; precorrin-2 from uroporphyrinogen III: step 1/1. It functions in the pathway cofactor biosynthesis; adenosylcobalamin biosynthesis; sirohydrochlorin from precorrin-2: step 1/1. Its pathway is porphyrin-containing compound metabolism; siroheme biosynthesis; precorrin-2 from uroporphyrinogen III: step 1/1. The protein operates within porphyrin-containing compound metabolism; siroheme biosynthesis; siroheme from sirohydrochlorin: step 1/1. It participates in porphyrin-containing compound metabolism; siroheme biosynthesis; sirohydrochlorin from precorrin-2: step 1/1. Its function is as follows. Multifunctional enzyme that catalyzes the SAM-dependent methylations of uroporphyrinogen III at position C-2 and C-7 to form precorrin-2 via precorrin-1. Then it catalyzes the NAD-dependent ring dehydrogenation of precorrin-2 to yield sirohydrochlorin. Finally, it catalyzes the ferrochelation of sirohydrochlorin to yield siroheme. The polypeptide is Siroheme synthase 2 (Klebsiella pneumoniae subsp. pneumoniae (strain ATCC 700721 / MGH 78578)).